The sequence spans 271 residues: uncharacterized protein (271 aa).

A disordered region spans residues 1-20 (MPDLHTLPAGSRPERAIRNN).

This sequence belongs to the PEP2 family.

This is an uncharacterized protein from Aspergillus terreus (strain NIH 2624 / FGSC A1156).